A 3582-amino-acid polypeptide reads, in one-letter code: Ubiquitin carboxyl-terminal hydrolase 34 (3582 aa).

A phosphoserine mark is found at serine 352, serine 486, serine 487, and serine 490. Disordered stretches follow at residues 503-533 (EEEELRRAAPSPWSPAASPQSSDNSDTHQSG), 551-670 (QQRL…ELRN), 682-705 (GESQGTSERNGTNSGTGKDLVFNT), 775-801 (HHHHHHHHHHHHHHHHHHHHHHHDGHM), and 1496-1515 (TGSYSDLYPDSDDSSEDQVE). The segment covering 510 to 524 (AAPSPWSPAASPQSS) has biased composition (low complexity). Over residues 560 to 570 (SMQGSSDETAN) the composition is skewed to polar residues. Residues 571 to 590 (SGEDGSSGPGSSSGHSDGSS) show a composition bias toward low complexity. Residues 591 to 609 (NEVNSSHASQSAGSPGSEV) are compositionally biased toward polar residues. Over residues 610 to 653 (QSEDIADIEALKEEEEEEEEEEEEEEEEDDEEEEDEEEDDDDDD) the composition is skewed to acidic residues. The span at 684-697 (SQGTSERNGTNSGT) shows a compositional bias: polar residues. A compositionally biased stretch (basic residues) spans 775–798 (HHHHHHHHHHHHHHHHHHHHHHHD). Residues 1504–1514 (PDSDDSSEDQV) are compositionally biased toward acidic residues. The residue at position 1506 (serine 1506) is a Phosphoserine. The region spanning 1931-2276 (VGLTNLGATC…SAYMLFYKRM (346 aa)) is the USP domain. The Nucleophile role is filled by cysteine 1940. Histidine 2201 (proton acceptor) is an active-site residue. Position 2525 is a phosphoserine (serine 2525). Residues 3369 to 3484 (SLQEQEAKER…QSNNGRFDDC (116 aa)) form a disordered region. Positions 3373 to 3384 (QEAKERKTKDDE) are enriched in basic and acidic residues. Serine 3395 and serine 3396 each carry phosphoserine. Residue threonine 3418 is modified to Phosphothreonine. Serine 3423 and serine 3443 each carry phosphoserine. Positions 3463 to 3484 (DGSHIRSQHAEEQSNNGRFDDC) are enriched in basic and acidic residues. Position 3539 is a phosphoserine (serine 3539).

This sequence belongs to the peptidase C19 family. Interacts with AXIN1 and AXIN2.

It catalyses the reaction Thiol-dependent hydrolysis of ester, thioester, amide, peptide and isopeptide bonds formed by the C-terminal Gly of ubiquitin (a 76-residue protein attached to proteins as an intracellular targeting signal).. Functionally, ubiquitin hydrolase that can remove conjugated ubiquitin from AXIN1 and AXIN2, thereby acting as a regulator of Wnt signaling pathway. Acts as an activator of the Wnt signaling pathway downstream of the beta-catenin destruction complex by deubiquitinating and stabilizing AXIN1 and AXIN2, leading to promote nuclear accumulation of AXIN1 and AXIN2 and positively regulate beta-catenin (CTNBB1)-mediated transcription. Recognizes and hydrolyzes the peptide bond at the C-terminal Gly of ubiquitin. Involved in the processing of poly-ubiquitin precursors as well as that of ubiquitinated proteins. This is Ubiquitin carboxyl-terminal hydrolase 34 (Usp34) from Mus musculus (Mouse).